Here is a 267-residue protein sequence, read N- to C-terminus: Thiamine thiazole synthase (267 aa).

NAD(+) contacts are provided by residues Ser41, 60–61 (ER), Gly68, Val132, and 160–162 (HVD). Residues Asp162 and His177 each coordinate Fe cation. An NAD(+)-binding site is contributed by Met227. Residue Arg237 coordinates glycine.

This sequence belongs to the THI4 family. In terms of assembly, homooctamer; tetramer of dimers. Fe(2+) serves as cofactor.

The enzyme catalyses hydrogen sulfide + glycine + NAD(+) = ADP-5-ethyl-4-methylthiazole-2-carboxylate + nicotinamide + 3 H2O + H(+). The protein operates within cofactor biosynthesis; thiamine diphosphate biosynthesis. Its function is as follows. Involved in the biosynthesis of the thiazole moiety of thiamine. Catalyzes the conversion of NAD and glycine to adenosine diphosphate 5-(2-hydroxyethyl)-4-methylthiazole-2-carboxylate (ADT), an adenylated thiazole intermediate, using free sulfide as a source of sulfur. This Saccharolobus islandicus (strain M.14.25 / Kamchatka #1) (Sulfolobus islandicus) protein is Thiamine thiazole synthase.